The following is a 341-amino-acid chain: Serpentine receptor class alpha-28 (341 aa).

The next 7 membrane-spanning stretches (helical) occupy residues 25–45, 57–77, 107–129, 142–162, 188–208, 242–262, and 275–295; these read FIISIIIISFFTTTKSVRVLL, LLFSAIINGIIHQCVTAVIRL, YYYTNLFSSFCCFSLFLDRLFSF, ASIVLILSQIVLPIGPLYWVF, VNNIRICVLIVLLFFAIFLYI, IVIFSQILCVGPTSSITSVFI, and LIISYLTGLTYSNFLLPLIIL.

Belongs to the nematode receptor-like protein sra family.

Its subcellular location is the membrane. This is Serpentine receptor class alpha-28 (sra-28) from Caenorhabditis elegans.